A 428-amino-acid chain; its full sequence is Maltoporin (428 aa).

The signal sequence occupies residues 1–21 (MKKTLLAVAIGGAMFATSAAA).

The protein belongs to the porin LamB (TC 1.B.3) family. Homotrimer formed of three 18-stranded antiparallel beta-barrels, containing three independent channels.

The protein resides in the cell outer membrane. The catalysed reaction is beta-maltose(in) = beta-maltose(out). Functionally, involved in the transport of maltose and maltodextrins. This is Maltoporin from Mannheimia succiniciproducens (strain KCTC 0769BP / MBEL55E).